The following is a 107-amino-acid chain: Nucleoid-associated protein amb4104 (107 aa).

This sequence belongs to the YbaB/EbfC family. Homodimer.

It localises to the cytoplasm. The protein resides in the nucleoid. Binds to DNA and alters its conformation. May be involved in regulation of gene expression, nucleoid organization and DNA protection. This chain is Nucleoid-associated protein amb4104, found in Paramagnetospirillum magneticum (strain ATCC 700264 / AMB-1) (Magnetospirillum magneticum).